The primary structure comprises 423 residues: MERYTDLVISKIPELGFTNLLCHIYSLAGLCSNIDVSKFLTNCNGYVVEKYDKSTTAGKVSCIPIGMMLELVESRHLSRPNSSDELDQKKELTDELKTRYHSIYDVFELPTSIPLAYFFKPRLREKVSKAIDFSQMDLKIDDLSRKGIHTGENPKVVKMKIEPERGAWMSNRSIKNLVSQFAYGSEVDYIGQFDMRFLNSLAIHEKFDAFMNKHILSYILKDKIKSSTSRFVMFGFCYLSHWKCVIYDKKQCLVSFYDSGGNIPTEFHHYNNFYFYSFSDGFNTNHRHSVLDNTNCDIDVLFRFFECIFGAKIGCINVEVNQLLESECGMFISLFMILCTRTPPKSFKSLKKVYTFFKFLADKKMTLFKSILFNLQDLSLDITETDNAGLKEYKRMEKWTKKSINVICDKLTTKLNRIVDDDE.

Catalysis depends on residues histidine 241, aspartate 248, and cysteine 328.

This sequence belongs to the peptidase C57 family.

The protein resides in the virion. In terms of biological role, late protein responsible for processing most or all of the viral core and membrane proteins known to undergo morphogenesis-associated proteolysis. These proteolytic events are involved in the transformation of immature virions (IV) into mature virions (MV). Probably cleaves at least the OPG129, OPG136, OPG098, and OPG144 precursors preferentially at Ala-Gly-|-Ala motifs. Also seems to process Ala-Gly-|-Ser and Ala-Gly-|-Thr motifs. This is Core protease OPG082 (OPG083) from Homo sapiens (Human).